Reading from the N-terminus, the 614-residue chain is Acetylcholinesterase (614 aa).

The first 31 residues, 1-31, serve as a signal peptide directing secretion; the sequence is MRPPQCLLHTPSLASPLLLLLLWLLGGGVGA. The cysteines at positions 100 and 127 are disulfide-linked. Residue W117 coordinates galanthamine. W117 is a binding site for huperzine A. Huprine W is bound at residue G153. Residue Y164 participates in huperzine A binding. Galanthamine is bound at residue 233–234; the sequence is ES. S234 is a binding site for huprine W. S234 acts as the Acyl-ester intermediate in catalysis. C288 and C303 are oxidised to a cystine. Residue N296 is glycosylated (N-linked (GlcNAc...) asparagine). The active-site Charge relay system is the E365. Y368 is a binding site for galanthamine. Position 368 (Y368) interacts with huperzine A. Residue N381 is glycosylated (N-linked (GlcNAc...) asparagine). A disulfide bridge links C440 with C560. Residues W470 and H478 each contribute to the huprine W site. H478 (charge relay system) is an active-site residue. N495 carries N-linked (GlcNAc...) asparagine glycosylation. Residue F588 is the site of GPI-anchor amidated glycine attachment.

It belongs to the type-B carboxylesterase/lipase family. Interacts with PRIMA1. The interaction with PRIMA1 is required to anchor it to the basal lamina of cells and organize into tetramers. Isoform H generates GPI-anchored dimers; disulfide linked. Isoform T generates multiple structures, ranging from monomers and dimers to collagen-tailed and hydrophobic-tailed forms, in which catalytic tetramers are associated with anchoring proteins that attach them to the basal lamina or to cell membranes. In the collagen-tailed forms, isoform T subunits are associated with a specific collagen, COLQ, which triggers the formation of isoform T tetramers, from monomers and dimers. Isoform R may be monomeric. In terms of tissue distribution, isoform H is highly expressed in erythrocytes.

It is found in the synapse. The protein resides in the secreted. Its subcellular location is the cell membrane. It localises to the nucleus. It catalyses the reaction acetylcholine + H2O = choline + acetate + H(+). In terms of biological role, hydrolyzes rapidly the acetylcholine neurotransmitter released into the synaptic cleft allowing to terminate the signal transduction at the neuromuscular junction. Role in neuronal apoptosis. This is Acetylcholinesterase from Homo sapiens (Human).